The following is a 245-amino-acid chain: rRNA adenine N-6-methyltransferase (245 aa).

S-adenosyl-L-methionine is bound by residues N10, L12, G37, E58, D83, and N100.

This sequence belongs to the class I-like SAM-binding methyltransferase superfamily. rRNA adenine N(6)-methyltransferase family.

It catalyses the reaction adenosine(2085) in 23S rRNA + 2 S-adenosyl-L-methionine = N(6)-dimethyladenosine(2085) in 23S rRNA + 2 S-adenosyl-L-homocysteine + 2 H(+). In terms of biological role, this protein produces a dimethylation of the adenine residue at position 2085 in 23S rRNA, resulting in reduced affinity between ribosomes and macrolide-lincosamide-streptogramin B antibiotics. The polypeptide is rRNA adenine N-6-methyltransferase (ermB) (Enterococcus faecalis (strain ATCC 700802 / V583)).